Consider the following 632-residue polypeptide: Extracellular metalloproteinase 2 (632 aa).

Positions 1–19 (MHGLLLAGLAAALPLGVAG) are cleaved as a signal peptide. Residues 20–244 (LPARQQSGLS…VHNVVDYVAS (225 aa)) constitute a propeptide that is removed on maturation. N-linked (GlcNAc...) asparagine glycosylation is present at asparagine 270. Zn(2+) is bound at residue histidine 429. Glutamate 430 is a catalytic residue. Histidine 433 provides a ligand contact to Zn(2+).

This sequence belongs to the peptidase M36 family. The cofactor is Zn(2+).

The protein localises to the secreted. In terms of biological role, secreted metalloproteinase that allows assimilation of proteinaceous substrates and probably acts as a virulence factor. The chain is Extracellular metalloproteinase 2 (MEP2) from Arthroderma gypseum (strain ATCC MYA-4604 / CBS 118893) (Microsporum gypseum).